The primary structure comprises 88 residues: DNA-directed RNA polymerase subunit omega (88 aa).

This sequence belongs to the RNA polymerase subunit omega family. As to quaternary structure, the RNAP catalytic core consists of 2 alpha, 1 beta, 1 beta' and 1 omega subunit. When a sigma factor is associated with the core the holoenzyme is formed, which can initiate transcription.

It carries out the reaction RNA(n) + a ribonucleoside 5'-triphosphate = RNA(n+1) + diphosphate. Its function is as follows. Promotes RNA polymerase assembly. Latches the N- and C-terminal regions of the beta' subunit thereby facilitating its interaction with the beta and alpha subunits. The sequence is that of DNA-directed RNA polymerase subunit omega from Actinobacillus succinogenes (strain ATCC 55618 / DSM 22257 / CCUG 43843 / 130Z).